A 187-amino-acid chain; its full sequence is Elongation factor P (187 aa).

It belongs to the elongation factor P family.

It is found in the cytoplasm. The protein operates within protein biosynthesis; polypeptide chain elongation. Involved in peptide bond synthesis. Stimulates efficient translation and peptide-bond synthesis on native or reconstituted 70S ribosomes in vitro. Probably functions indirectly by altering the affinity of the ribosome for aminoacyl-tRNA, thus increasing their reactivity as acceptors for peptidyl transferase. The protein is Elongation factor P of Rhizorhabdus wittichii (strain DSM 6014 / CCUG 31198 / JCM 15750 / NBRC 105917 / EY 4224 / RW1) (Sphingomonas wittichii).